Here is a 120-residue protein sequence, read N- to C-terminus: NAD(P)H-quinone oxidoreductase subunit 3, chloroplastic (120 aa).

Helical transmembrane passes span Ile-9–Gly-29, Met-64–Met-84, and Val-88–Leu-108.

Belongs to the complex I subunit 3 family. NDH is composed of at least 16 different subunits, 5 of which are encoded in the nucleus.

The protein localises to the plastid. It is found in the chloroplast thylakoid membrane. It catalyses the reaction a plastoquinone + NADH + (n+1) H(+)(in) = a plastoquinol + NAD(+) + n H(+)(out). It carries out the reaction a plastoquinone + NADPH + (n+1) H(+)(in) = a plastoquinol + NADP(+) + n H(+)(out). In terms of biological role, NDH shuttles electrons from NAD(P)H:plastoquinone, via FMN and iron-sulfur (Fe-S) centers, to quinones in the photosynthetic chain and possibly in a chloroplast respiratory chain. The immediate electron acceptor for the enzyme in this species is believed to be plastoquinone. Couples the redox reaction to proton translocation, and thus conserves the redox energy in a proton gradient. This is NAD(P)H-quinone oxidoreductase subunit 3, chloroplastic from Aethionema grandiflorum (Persian stone-cress).